Reading from the N-terminus, the 207-residue chain is Small ribosomal subunit protein uS4c (207 aa).

Positions Met92 to Glu156 constitute an S4 RNA-binding domain.

This sequence belongs to the universal ribosomal protein uS4 family. As to quaternary structure, part of the 30S ribosomal subunit. Contacts protein S5. The interaction surface between S4 and S5 is involved in control of translational fidelity.

It is found in the plastid. The protein resides in the chloroplast. Functionally, one of the primary rRNA binding proteins, it binds directly to 16S rRNA where it nucleates assembly of the body of the 30S subunit. Its function is as follows. With S5 and S12 plays an important role in translational accuracy. In Equisetum sylvaticum (Wood horsetail), this protein is Small ribosomal subunit protein uS4c (rps4).